We begin with the raw amino-acid sequence, 649 residues long: Probable cyclic nucleotide-gated ion channel 12 (649 aa).

The Cytoplasmic segment spans residues 1–43 (MNHRRSKFARIDSMGVDGKLKSVRGRLKKVYGKMKTLENWRKT). The chain crosses the membrane as a helical span at residues 44-64 (VLLACVVALAIDPLFLFIPLI). At 65–76 (DSQRFCFTFDKT) the chain is on the extracellular side. A helical membrane pass occupies residues 77–97 (LVAVVCVIRTFIDTFYVIHII). Over 98-128 (YYLITETIAPRSQASLRGEIVVHSKATLKTR) the chain is Cytoplasmic. A helical transmembrane segment spans residues 129–149 (LLFHFIVDIISVLPIPQVVVL). Over 150–162 (TLIPLSASLVSER) the chain is Extracellular. A helical membrane pass occupies residues 163 to 183 (ILKWIILSQYVPRIIRMYPLY). Residues 184 to 200 (KEVTRAFGTVAESKWAG) lie on the Cytoplasmic side of the membrane. Residues 201-221 (AALNLFLYMLHSYVFGAFWYL) form a helical membrane-spanning segment. Over 222–329 (SSIERKSKCW…QNLETSNSAG (108 aa)) the chain is Extracellular. A helical transmembrane segment spans residues 330 to 350 (EIFFAIIICVSGLLLFAVLIG). Over 351 to 649 (NVQKYLQSST…ADLEFAKAEA (299 aa)) the chain is Cytoplasmic. Residues 436–559 (LNIM…TFRL) and Glu507 each bind a nucleoside 3',5'-cyclic phosphate. A calmodulin-binding region spans residues 545 to 560 (LNVFQRQKLQRTFRLY). The IQ domain maps to 565-594 (RSWAAFFIQAAWRKHCKRKLSKTRDNENIP). Positions 618–649 (RRKDTADCSSSPDMSPPVPHKPADLEFAKAEA) are disordered. Basic and acidic residues predominate over residues 638-649 (KPADLEFAKAEA).

It belongs to the cyclic nucleotide-gated cation channel (TC 1.A.1.5) family. In terms of assembly, homotetramer or heterotetramer.

It is found in the cell membrane. Its function is as follows. Probable cyclic nucleotide-gated ion channel. The polypeptide is Probable cyclic nucleotide-gated ion channel 12 (CNGC12) (Arabidopsis thaliana (Mouse-ear cress)).